A 438-amino-acid polypeptide reads, in one-letter code: Cell division cycle-associated 7-like protein (438 aa).

The Integrase domain-binding motif 1 (IBM1) motif lies at 9-33 (IPKEVADIFSAPSDDEEFVGFQDDV). S21 is subject to Phosphoserine. The interval 56 to 115 (VCFRSKYFTEELRRIFKEDTDSEMEDFEGFTESELNMSSNPELMESELSDSDKAYPVMND) is PSIP1-binding. The Integrase domain-binding motif 2 (IBM2) signature appears at 63-89 (FTEELRRIFKEDTDSEMEDFEGFTESE). Residues 74–199 (DTDSEMEDFE…ESRAESQENS (126 aa)) form a disordered region. T75 is subject to Phosphothreonine. Positions 75 to 86 (TDSEMEDFEGFT) are enriched in acidic residues. The residue at position 77 (S77) is a Phosphoserine. Phosphothreonine is present on T86. S101, S104, S135, S136, and S159 each carry phosphoserine. A compositionally biased stretch (basic and acidic residues) spans 152-167 (RTPDKDSSHLLDSKTD). Basic residues predominate over residues 168 to 177 (LRRKKSSRQP). Phosphoserine occurs at positions 183 and 185. The MYC-binding stretch occupies residues 201 to 223 (ALLKRAMNIKENKAMLAQLLAEL). Residues K210 and K213 each participate in a glycyl lysine isopeptide (Lys-Gly) (interchain with G-Cter in SUMO2) cross-link. S249 carries the phosphoserine modification.

As to quaternary structure, interacts with MYC. Interacts (via IBM motifs) with PSIP1 (via IBD domain); phosphorylation increases its affinity for PSIP1. Post-translationally, phosphorylation increases its interaction with PSIP1. Expressed in all tissues but not detected in total brain.

Its subcellular location is the cytoplasm. It is found in the nucleus. Plays a role in transcriptional regulation as a repressor that inhibits monoamine oxidase A (MAOA) activity and gene expression by binding to the promoter. Plays an important oncogenic role in mediating the full transforming effect of MYC in medulloblastoma cells. Involved in apoptotic signaling pathways; May act downstream of P38-kinase and BCL-2, but upstream of CASP3/caspase-3 as well as CCND1/cyclin D1 and E2F1. The sequence is that of Cell division cycle-associated 7-like protein (Cdca7l) from Mus musculus (Mouse).